The primary structure comprises 248 residues: Probable transcriptional regulatory protein PSPTO_3980 (248 aa).

Belongs to the TACO1 family.

It is found in the cytoplasm. This is Probable transcriptional regulatory protein PSPTO_3980 from Pseudomonas syringae pv. tomato (strain ATCC BAA-871 / DC3000).